Here is a 228-residue protein sequence, read N- to C-terminus: Probable septum site-determining protein MinC (228 aa).

The protein belongs to the MinC family. In terms of assembly, interacts with MinD and FtsZ.

In terms of biological role, cell division inhibitor that blocks the formation of polar Z ring septums. Rapidly oscillates between the poles of the cell to destabilize FtsZ filaments that have formed before they mature into polar Z rings. Prevents FtsZ polymerization. The polypeptide is Probable septum site-determining protein MinC (Oceanobacillus iheyensis (strain DSM 14371 / CIP 107618 / JCM 11309 / KCTC 3954 / HTE831)).